Reading from the N-terminus, the 771-residue chain is Probable exo-1,4-beta-xylosidase bxlB (771 aa).

A signal peptide spans 1 to 25; it reads MVGLTPQHYGNAIALMTYLASTALA. N-linked (GlcNAc...) asparagine glycosylation occurs at N67. Residue D293 is part of the active site. N-linked (GlcNAc...) asparagine glycans are attached at residues N305, N345, N423, N462, and N463.

It belongs to the glycosyl hydrolase 3 family.

The protein localises to the secreted. It catalyses the reaction Hydrolysis of (1-&gt;4)-beta-D-xylans, to remove successive D-xylose residues from the non-reducing termini.. The protein operates within glycan degradation; xylan degradation. Xylan 1,4-beta-xylosidase involved in the hydrolysis of xylan, a major structural heterogeneous polysaccharide found in plant biomass representing the second most abundant polysaccharide in the biosphere, after cellulose. The chain is Probable exo-1,4-beta-xylosidase bxlB (bxlB) from Aspergillus clavatus (strain ATCC 1007 / CBS 513.65 / DSM 816 / NCTC 3887 / NRRL 1 / QM 1276 / 107).